Reading from the N-terminus, the 212-residue chain is Adenylate kinase (212 aa).

Residue Gly-10 to Thr-15 coordinates ATP. Residues Ser-30–Val-59 form an NMP region. Residues Thr-31, Arg-36, Glu-57–Val-59, Gly-86–Arg-89, and Gln-93 each bind AMP. The segment at Gly-127 to Asp-159 is LID. ATP is bound by residues Arg-128 and Thr-137–Phe-138. Arg-156 and Arg-167 together coordinate AMP. ATP is bound at residue Gln-195.

Belongs to the adenylate kinase family. In terms of assembly, monomer.

It is found in the cytoplasm. It carries out the reaction AMP + ATP = 2 ADP. The protein operates within purine metabolism; AMP biosynthesis via salvage pathway; AMP from ADP: step 1/1. Catalyzes the reversible transfer of the terminal phosphate group between ATP and AMP. Plays an important role in cellular energy homeostasis and in adenine nucleotide metabolism. The chain is Adenylate kinase from Streptococcus pyogenes serotype M1.